We begin with the raw amino-acid sequence, 326 residues long: F-box/LRR-repeat protein 12 (326 aa).

In terms of domain architecture, F-box spans methionine 1–valine 47. LRR repeat units follow at residues leucine 51–glycine 78, alanine 86–valine 111, aspartate 113–serine 133, valine 161–glycine 185, threonine 186–glycine 211, cysteine 212–threonine 236, valine 237–glycine 261, and proline 266–glycine 291.

As to quaternary structure, interacts with SKP1 and CUL1.

It participates in protein modification; protein ubiquitination. Its function is as follows. Substrate-recognition component of the SCF (SKP1-CUL1-F-box protein)-type E3 ubiquitin ligase complex. Mediates the polyubiquitination and proteasomal degradation of CAMK1 leading to disruption of cyclin D1/CDK4 complex assembly which results in G1 cell cycle arrest in lung epithelia. The protein is F-box/LRR-repeat protein 12 (FBXL12) of Homo sapiens (Human).